A 446-amino-acid chain; its full sequence is Pre-rRNA-processing protein crb3/ipi3 (446 aa).

5 WD repeats span residues 74-113, 116-155, 172-214, 216-257, and 294-333; these read ILPEILICVQSSPCGSWLAAGTEKGNLYIWSLKSGALIYF, AHYQPLTILKFSNDGMVLFTASNDGDVFAWLISTLVDQNS, GHKR…LLTT, ALPS…SNNV, and SCQSPITTLTVSFDASLLISGDKDGNVLVWDSVSRQVLRR.

The protein belongs to the WD repeat IPI3/WDR18 family. In terms of assembly, component of the RIX1 complex, composed of ipi1, rix1/ipi2 and crb3/ipi3 in a 1:2:2 stoichiometry. The complex interacts (via rix1) with mdn1 (via its hexameric AAA ATPase ring) and the pre-60S ribosome particles. Interacts with rix1, gcr3 and Las1.

The protein localises to the nucleus. It is found in the chromosome. In terms of biological role, required for both pre-rRNA processing and heterochromatic gene silencing. Its function is as follows. Component of the RIX1 complex required for processing of ITS2 sequences from 35S pre-rRNA. The sequence is that of Pre-rRNA-processing protein crb3/ipi3 (crb3) from Schizosaccharomyces pombe (strain 972 / ATCC 24843) (Fission yeast).